Reading from the N-terminus, the 928-residue chain is DNA-binding protein RFX6 (928 aa).

2 disordered regions span residues M1–L20 and E50–K98. The RFX-type winged-helix DNA-binding region spans T124–E199.

The protein belongs to the RFX family. As to quaternary structure, interacts with RFX3. Expressed in pancreas. Expressed in pancreatic beta-cells (insulin-positive cells) and alpha-cells (glucagon-positive cells) (at protein level). Specifically expressed in pancreas, small intestine and colon. Expressed in endocrine cells in the islets.

Its subcellular location is the nucleus. In terms of biological role, transcription factor required to direct islet cell differentiation during endocrine pancreas development. Specifically required for the differentiation of 4 of the 5 islet cell types and for the production of insulin. Not required for pancreatic PP (polypeptide-producing) cells differentiation. Acts downstream of NEUROG3 and regulates the transcription factors involved in beta-cell maturation and function, thereby restricting the expression of the beta-cell differentiation and specification genes, and thus the beta-cell fate choice. Activates transcription by forming a heterodimer with RFX3 and binding to the X-box in the promoter of target genes. Involved in glucose-stimulated insulin secretion by promoting insulin and L-type calcium channel gene transcription. In Homo sapiens (Human), this protein is DNA-binding protein RFX6 (RFX6).